Here is a 69-residue protein sequence, read N- to C-terminus: MSVLTPLLLRGLTGSARRLPVLRAQVHSKPPREKLGTMDVAIGLTSCFVCFLLPSGWVLSHLETYKKRE.

A mitochondrion-targeting transit peptide spans 1 to 25 (MSVLTPLLLRGLTGSARRLPVLRAQ). An SIFI-degron motif is present at residues 2-19 (SVLTPLLLRGLTGSARRL). The Mitochondrial matrix segment spans residues 26–36 (VHSKPPREKLG). A helical membrane pass occupies residues 37 to 60 (TMDVAIGLTSCFVCFLLPSGWVLS). At 61–69 (HLETYKKRE) the chain is on the mitochondrial intermembrane side.

Belongs to the cytochrome c oxidase VIII family. In terms of assembly, component of the cytochrome c oxidase (complex IV, CIV), a multisubunit enzyme composed of 14 subunits. The complex is composed of a catalytic core of 3 subunits MT-CO1, MT-CO2 and MT-CO3, encoded in the mitochondrial DNA, and 11 supernumerary subunits COX4I, COX5A, COX5B, COX6A, COX6B, COX6C, COX7A, COX7B, COX7C, COX8 and NDUFA4, which are encoded in the nuclear genome. The complex exists as a monomer or a dimer and forms supercomplexes (SCs) in the inner mitochondrial membrane with NADH-ubiquinone oxidoreductase (complex I, CI) and ubiquinol-cytochrome c oxidoreductase (cytochrome b-c1 complex, complex III, CIII), resulting in different assemblies (supercomplex SCI(1)III(2)IV(1) and megacomplex MCI(2)III(2)IV(2)). Post-translationally, in response to mitochondrial stress, the precursor protein is ubiquitinated by the SIFI complex in the cytoplasm before mitochondrial import, leading to its degradation. Within the SIFI complex, UBR4 initiates ubiquitin chain that are further elongated or branched by KCMF1.

The protein resides in the mitochondrion inner membrane. It participates in energy metabolism; oxidative phosphorylation. Component of the cytochrome c oxidase, the last enzyme in the mitochondrial electron transport chain which drives oxidative phosphorylation. The respiratory chain contains 3 multisubunit complexes succinate dehydrogenase (complex II, CII), ubiquinol-cytochrome c oxidoreductase (cytochrome b-c1 complex, complex III, CIII) and cytochrome c oxidase (complex IV, CIV), that cooperate to transfer electrons derived from NADH and succinate to molecular oxygen, creating an electrochemical gradient over the inner membrane that drives transmembrane transport and the ATP synthase. Cytochrome c oxidase is the component of the respiratory chain that catalyzes the reduction of oxygen to water. Electrons originating from reduced cytochrome c in the intermembrane space (IMS) are transferred via the dinuclear copper A center (CU(A)) of subunit 2 and heme A of subunit 1 to the active site in subunit 1, a binuclear center (BNC) formed by heme A3 and copper B (CU(B)). The BNC reduces molecular oxygen to 2 water molecules using 4 electrons from cytochrome c in the IMS and 4 protons from the mitochondrial matrix. This Eulemur fulvus fulvus (Brown lemur) protein is Cytochrome c oxidase subunit 8A, mitochondrial (COX8A).